A 101-amino-acid chain; its full sequence is Small ribosomal subunit protein uS14 (101 aa).

This sequence belongs to the universal ribosomal protein uS14 family. Part of the 30S ribosomal subunit. Contacts proteins S3 and S10.

Its function is as follows. Binds 16S rRNA, required for the assembly of 30S particles and may also be responsible for determining the conformation of the 16S rRNA at the A site. This is Small ribosomal subunit protein uS14 from Shewanella loihica (strain ATCC BAA-1088 / PV-4).